The chain runs to 187 residues: Core-binding factor subunit beta (187 aa).

S10 is modified (phosphoserine; by CK2). Residues 139 to 187 are disordered; it reads AQQAFEEARRRTREFEDRDRSHREEMEARRQQDPSPGSNLGGGDDLKLR. Basic and acidic residues predominate over residues 144–170; the sequence is EEARRRTREFEDRDRSHREEMEARRQQ. A Phosphoserine; by PKC modification is found at S159.

It belongs to the CBF-beta family. Heterodimer with RUNX1, RUNX2 and RUNX3. Interacts with COPRS. Found in a complex with PRMT5 and RUNX1. As to expression, expressed in all tissues tested. Highest level in thymus, but also abundantly expressed in muscle, lung and brain.

It is found in the nucleus. Forms the heterodimeric complex core-binding factor (CBF) with RUNX family proteins (RUNX1, RUNX2, and RUNX3). RUNX members modulate the transcription of their target genes through recognizing the core consensus binding sequence 5'-TGTGGT-3', or very rarely, 5'-TGCGGT-3', within their regulatory regions via their runt domain, while CBFB is a non-DNA-binding regulatory subunit that allosterically enhances the sequence-specific DNA-binding capacity of RUNX. The heterodimers bind to the core site of a number of enhancers and promoters, including murine leukemia virus, polyomavirus enhancer, T-cell receptor enhancers, LCK, IL3 and GM-CSF promoters. CBF complexes repress ZBTB7B transcription factor during cytotoxic (CD8+) T cell development. They bind to RUNX-binding sequence within the ZBTB7B locus acting as transcriptional silencer and allowing for cytotoxic T cell differentiation. This chain is Core-binding factor subunit beta (Cbfb), found in Mus musculus (Mouse).